The sequence spans 557 residues: Eudesmanediol synthase (557 aa).

Mg(2+) is bound by residues aspartate 310 and aspartate 314. Substrate is bound by residues aspartate 310, aspartate 314, arginine 450, and asparagine 453. The DDXXD motif signature appears at 310–314 (DDTFD). Mg(2+) contacts are provided by asparagine 453 and serine 457.

It belongs to the terpene synthase family. Monomer. Mg(2+) serves as cofactor. The cofactor is Mn(2+). Specifically expressed in roots.

It localises to the cytoplasm. The enzyme catalyses (2E,6E)-farnesyl diphosphate + 2 H2O = 7-epi-ent-eudesmane-5,11-diol + diphosphate. It participates in secondary metabolite biosynthesis; terpenoid biosynthesis. In terms of biological role, component of the volatile terpenes biosynthesis pathways. Dihydroxylated sesquiterpenoid synthase that generates dually hydroxylated products directly from (E,E)-farnesyl diphosphate, primarily eudesmane-2,11-diol, along with two closely related structural isomers. The polypeptide is Eudesmanediol synthase (Zea mays (Maize)).